The sequence spans 1197 residues: ATP-dependent helicase/nuclease subunit A (1197 aa).

The region spanning 2–458 (KNWTTEQQAA…IDLAKNFRSR (457 aa)) is the UvrD-like helicase ATP-binding domain. Position 23-30 (23-30 (AAAGSGKT)) interacts with ATP. Residues 485–774 (RAALYQGASF…RIMSIHKSKG (290 aa)) enclose the UvrD-like helicase C-terminal domain.

This sequence belongs to the helicase family. AddA subfamily. Heterodimer of AddA and AddB/RexB. It depends on Mg(2+) as a cofactor.

The catalysed reaction is Couples ATP hydrolysis with the unwinding of duplex DNA by translocating in the 3'-5' direction.. It carries out the reaction ATP + H2O = ADP + phosphate + H(+). Its function is as follows. The heterodimer acts as both an ATP-dependent DNA helicase and an ATP-dependent, dual-direction single-stranded exonuclease. Recognizes the chi site generating a DNA molecule suitable for the initiation of homologous recombination. The AddA nuclease domain is required for chi fragment generation; this subunit has the helicase and 3' -&gt; 5' nuclease activities. This is ATP-dependent helicase/nuclease subunit A from Alkaliphilus metalliredigens (strain QYMF).